Here is a 222-residue protein sequence, read N- to C-terminus: Lipid A 4'-phosphatase (222 aa).

At 1–3 (MAR) the chain is on the cytoplasmic side. A helical membrane pass occupies residues 4-24 (FHIILGLVVCFFAWIFFLIFP). Topologically, residues 25–58 (NLDIQFAGHFYNSSAHQFIGGYDGFLGFLHWFAR) are periplasmic. A helical membrane pass occupies residues 59 to 79 (FFPIFFSIIVILFLLGSLFID). The Cytoplasmic portion of the chain corresponds to 80 to 87 (KFKIKYRK). The chain crosses the membrane as a helical span at residues 88–108 (AIFFIAVCLWIGPGLVVNYVF). Residues 109-144 (KDHWGRPRPVMVEQFNGDKIFQPPFVISSQCDKNCS) lie on the Periplasmic side of the membrane. Residues 145–165 (FVCGDASMGFWLFAFMPLLAT) form a helical membrane-spanning segment. At 166-169 (RKKK) the chain is on the cytoplasmic side. Residues 170–190 (LVAFIAAVVAGGGLGLMRMSQ) form a helical membrane-spanning segment. Residues 191-193 (GGH) are Periplasmic-facing. The chain crosses the membrane as a helical span at residues 194-214 (FFSDVVFCGIFVYISTWVVYA). The Cytoplasmic segment spans residues 215-222 (LMYRKKEY).

This sequence belongs to the lipid A LpxF 4'-phosphatase family.

The protein localises to the cell inner membrane. It functions in the pathway bacterial outer membrane biogenesis; LPS lipid A biosynthesis. Removes the 4'-phosphate moiety from lipid IV(A) (a tetraacylated precursor of lipid A) and from pentaacylated lipid A, but not from hexaacylated lipid A (as is found in E.coli). Does not dephosphorylate phosphatidic acid, phosphatidylglycerophosphate, or the 1-phosphate group of lipid A and lipid A precursors. Its expression in E.coli confers resistance to the cationic antimicrobial peptide (CAMP) polymyxin B. Plays a critical role in the ability of the bacteria to avoid the host's innate immune system, especially the bactericidal action of CAMPs, although whether it is CAMP-sensitivity or increased sensitivity to the immune system is not clear. This chain is Lipid A 4'-phosphatase, found in Francisella tularensis subsp. novicida (strain U112).